A 388-amino-acid chain; its full sequence is Probable serine/threonine-protein kinase PBL20 (388 aa).

The S-palmitoyl cysteine moiety is linked to residue C3. The region spanning 91–372 (FSRKLKIGEG…FVVESLTNII (282 aa)) is the Protein kinase domain. ATP-binding positions include 97–105 (IGEGGFGSV) and K128. D221 functions as the Proton acceptor in the catalytic mechanism.

This sequence belongs to the protein kinase superfamily. Ser/Thr protein kinase family.

It localises to the cell membrane. The catalysed reaction is L-seryl-[protein] + ATP = O-phospho-L-seryl-[protein] + ADP + H(+). The enzyme catalyses L-threonyl-[protein] + ATP = O-phospho-L-threonyl-[protein] + ADP + H(+). Its function is as follows. May be involved in plant defense signaling. The sequence is that of Probable serine/threonine-protein kinase PBL20 from Arabidopsis thaliana (Mouse-ear cress).